The following is a 419-amino-acid chain: Serine--tRNA ligase (419 aa).

226-228 contributes to the L-serine binding site; that stretch reads TSE. Residues 257–259 and Val-273 contribute to the ATP site; that span reads RRE. Position 280 (Glu-280) interacts with L-serine. ATP is bound at residue 344–347; it reads ELTS. Thr-379 serves as a coordination point for L-serine.

This sequence belongs to the class-II aminoacyl-tRNA synthetase family. Type-1 seryl-tRNA synthetase subfamily. Homodimer. The tRNA molecule binds across the dimer.

The protein resides in the cytoplasm. The catalysed reaction is tRNA(Ser) + L-serine + ATP = L-seryl-tRNA(Ser) + AMP + diphosphate + H(+). The enzyme catalyses tRNA(Sec) + L-serine + ATP = L-seryl-tRNA(Sec) + AMP + diphosphate + H(+). Its pathway is aminoacyl-tRNA biosynthesis; selenocysteinyl-tRNA(Sec) biosynthesis; L-seryl-tRNA(Sec) from L-serine and tRNA(Sec): step 1/1. Its function is as follows. Catalyzes the attachment of serine to tRNA(Ser). Is also able to aminoacylate tRNA(Sec) with serine, to form the misacylated tRNA L-seryl-tRNA(Sec), which will be further converted into selenocysteinyl-tRNA(Sec). In Mycobacterium marinum (strain ATCC BAA-535 / M), this protein is Serine--tRNA ligase.